We begin with the raw amino-acid sequence, 111 residues long: Nucleoid-associated protein PputGB1_3833 (111 aa).

2 disordered regions span residues 1-25 (MMKG…KMQE) and 87-111 (EQSS…KMPF).

Belongs to the YbaB/EbfC family. Homodimer.

The protein localises to the cytoplasm. It localises to the nucleoid. Its function is as follows. Binds to DNA and alters its conformation. May be involved in regulation of gene expression, nucleoid organization and DNA protection. This chain is Nucleoid-associated protein PputGB1_3833, found in Pseudomonas putida (strain GB-1).